A 215-amino-acid polypeptide reads, in one-letter code: MTNGISILPHTQPVYGDAAVAAMAERVVGALGPAVVSHAIAFGELTLVVQASDIVYALTYLRDDPACAFRNFIDICGVDYPQREKRFDVVYHLLSLRHNLRIRLKVQTDEVTPVPSVIEVFPAANWYERETYDLYGILFSGHPDLRRLLTDYGFEGHPLRKDFPLTGFVEVRYDQDQARVVYEPVQLTQEFRNFDFLSPWEGTDYVLPGDEKTSA.

Belongs to the complex I 30 kDa subunit family. As to quaternary structure, NDH-1 is composed of 14 different subunits. Subunits NuoB, C, D, E, F, and G constitute the peripheral sector of the complex.

It is found in the cell inner membrane. It carries out the reaction a quinone + NADH + 5 H(+)(in) = a quinol + NAD(+) + 4 H(+)(out). In terms of biological role, NDH-1 shuttles electrons from NADH, via FMN and iron-sulfur (Fe-S) centers, to quinones in the respiratory chain. The immediate electron acceptor for the enzyme in this species is believed to be ubiquinone. Couples the redox reaction to proton translocation (for every two electrons transferred, four hydrogen ions are translocated across the cytoplasmic membrane), and thus conserves the redox energy in a proton gradient. The protein is NADH-quinone oxidoreductase subunit C of Methylobacterium radiotolerans (strain ATCC 27329 / DSM 1819 / JCM 2831 / NBRC 15690 / NCIMB 10815 / 0-1).